The sequence spans 708 residues: Pre-mRNA-splicing factor SPP382 (708 aa).

One can recognise a G-patch domain in the interval 61–108 (TYGIGAKLLSSMGYVAGKGLGKDGSGITTPIETQSRPMHNAGLGMFSN).

As to quaternary structure, component of the NTR complex (NTC-related complex), composed of NTR1, NTR2 and PRP43. Interacts with CLF1 and NTR2. Interacts with PRP43 and PRP45.

Its subcellular location is the cytoplasm. It is found in the nucleus. Functionally, involved in pre-mRNA splicing and spliceosome disassembly. Promotes release of excised lariat intron from the spliceosome by acting as a receptor for PRP43. This targeting of PRP43 leads to disassembly of the spliceosome with the separation of the U2, U5, U6 snRNPs and the NTC complex. This is Pre-mRNA-splicing factor SPP382 (SPP382) from Saccharomyces cerevisiae (strain ATCC 204508 / S288c) (Baker's yeast).